The sequence spans 581 residues: Neither inactivation nor afterpotential protein G (581 aa).

The N-terminal stretch at 1-26 is a signal peptide; it reads MGMKFQKILVLAGIVIGFLSIIVVLA. Position 48–77 (48–77) interacts with FAD; the sequence is DYVIVGGGTGGSTLTSLLAKNSNGSVLLIE. N-linked (GlcNAc...) asparagine glycosylation is found at Asn70, Asn156, Asn404, and Asn464. The active-site Proton acceptor is His516.

It belongs to the GMC oxidoreductase family. Requires FAD as cofactor.

The protein localises to the secreted. Its function is as follows. Oxidoreductase involved in biosynthesis of 3-hydroxyretinal, a chromophore for rhodopsin Rh1. Not responsible for the initial hydroxylation of the retinal ring but rather acts in a subsequent step in chromophore production. May catalyze the conversion of (3R)-3-hydroxyretinol to the 3S enantiomer. The polypeptide is Neither inactivation nor afterpotential protein G (ninaG) (Drosophila melanogaster (Fruit fly)).